Here is a 286-residue protein sequence, read N- to C-terminus: Nucleotide-binding protein VC0395_A2112/VC395_2645 (286 aa).

Residue 8–15 participates in ATP binding; sequence GQSGAGKS. 56–59 is a GTP binding site; sequence DIRN.

The protein belongs to the RapZ-like family.

Its function is as follows. Displays ATPase and GTPase activities. This chain is Nucleotide-binding protein VC0395_A2112/VC395_2645, found in Vibrio cholerae serotype O1 (strain ATCC 39541 / Classical Ogawa 395 / O395).